Here is a 581-residue protein sequence, read N- to C-terminus: FAD-dependent monooxygenase DEP4 (581 aa).

43-46 (VWSK) is an FAD binding site. Position 54-56 (54-56 (FAQ)) interacts with NADP(+). FAD is bound at residue V108. NADP(+) contacts are provided by residues 183-202 (VGRS…EGKR), 219-220 (AP), and 351-352 (DI). M470 lines the FAD pocket.

This sequence belongs to the FAD-binding monooxygenase family. It depends on FAD as a cofactor.

It functions in the pathway polyketide biosynthesis. Functionally, FAD-dependent monooxygenase; part of the gene cluster that mediates the biosynthesis of depudecin, a highly oxidized eleven-carbon linear polyketide that acts as a histone deacetylase (HDAC) inhibitor and makes a small contribution to pathogenesis. The reducing polyketide synthase DEP5 is the central enzyme in depudecin biosynthesis by yielding the backbone polyketide chain. The monooxygenases DEP2 and DEP4, as well as the uncharacterized protein DEP1, then act as tailoring enzymes to modify the intermediate polyketide chain into depudecin. The chain is FAD-dependent monooxygenase DEP4 from Alternaria brassicicola (Dark leaf spot agent).